We begin with the raw amino-acid sequence, 98 residues long: DNA-binding protein Fis (98 aa).

A DNA-binding region (H-T-H motif) is located at residues 74–93 (QTRAALMMGINRGTLRKKLK).

The protein belongs to the transcriptional regulatory Fis family. In terms of assembly, homodimer.

Functionally, activates ribosomal RNA transcription. Plays a direct role in upstream activation of rRNA promoters. The chain is DNA-binding protein Fis from Citrobacter koseri (strain ATCC BAA-895 / CDC 4225-83 / SGSC4696).